Here is a 432-residue protein sequence, read N- to C-terminus: MRKIKGLRWYMIALVTLGTVLGYLTRNTVAAAAPTLMEELNISTQQYSYIIAAYSAAYTVMQPVAGYVLDVLGTKIGYAMFAVLWAVFCGATALAGSWGGLAVARGAVGAAEAAMIPAGLKASSEWFPAKERSIAVGYFNVGSSIGAMIAPPLVVWAIVMHSWQMAFIISGALSFIWAMAWLIFYKHPRDQKHLTDEERDYIINGQEAQHQVSTAKKMSVGQILRNRQFWGIALPRFLAEPAWGTFNAWIPLFMFKVYGFNLKEIAMFAWMPMLFADLGCILGGYLPPLFQRWFGVNLIVSRKMVVTLGAVLMIGPGMIGLFTNPYVAIMLLCIGGFAHQALSGALITLSSDVFGRNEVATANGLTGMSAWLASTLFALVVGALADTIGFSPLFAVLAVFDLLGALVIWTVLQNKPAIEVAQETHNDPAPQH.

A signal peptide spans M1 to A31. Residues A33–S48 lie on the Periplasmic side of the membrane. Residues Y49–L69 form a helical membrane-spanning segment. At D70–K75 the chain is on the cytoplasmic side. Residues I76–G96 traverse the membrane as a helical segment. Topologically, residues S97–G99 are periplasmic. A helical transmembrane segment spans residues G100–L120. The Cytoplasmic segment spans residues K121–Y138. Residues F139–V159 traverse the membrane as a helical segment. The Periplasmic portion of the chain corresponds to M160–Q164. A helical membrane pass occupies residues M165–Y185. Over K186–R236 the chain is Cytoplasmic. The chain crosses the membrane as a helical span at residues F237 to V257. The Periplasmic portion of the chain corresponds to Y258–E264. A helical membrane pass occupies residues I265–Y285. Topologically, residues L286–W293 are cytoplasmic. Residues F294–I314 traverse the membrane as a helical segment. Topologically, residues G315 to G317 are periplasmic. The helical transmembrane segment at M318–A338 threads the bilayer. The Cytoplasmic portion of the chain corresponds to H339–S369. A helical transmembrane segment spans residues A370–F390. A topological domain (periplasmic) is located at residue S391. A helical membrane pass occupies residues P392–L412. Residues Q413–H432 are Cytoplasmic-facing.

Belongs to the major facilitator superfamily. Phthalate permease family.

It is found in the cell inner membrane. It catalyses the reaction aldehydo-D-glucuronate(in) + H(+)(in) = aldehydo-D-glucuronate(out) + H(+)(out). The enzyme catalyses aldehydo-D-galacturonate(out) + H(+)(out) = aldehydo-D-galacturonate(in) + H(+)(in). Functionally, transport of aldohexuronates such as D-glucuronate and D-galacturonate. This is Hexuronate transporter (exuT) from Escherichia coli O157:H7.